Reading from the N-terminus, the 170-residue chain is Adenine phosphoribosyltransferase (170 aa).

Belongs to the purine/pyrimidine phosphoribosyltransferase family. Homodimer.

It localises to the cytoplasm. It catalyses the reaction AMP + diphosphate = 5-phospho-alpha-D-ribose 1-diphosphate + adenine. It participates in purine metabolism; AMP biosynthesis via salvage pathway; AMP from adenine: step 1/1. Functionally, catalyzes a salvage reaction resulting in the formation of AMP, that is energically less costly than de novo synthesis. The sequence is that of Adenine phosphoribosyltransferase from Geobacillus thermodenitrificans (strain NG80-2).